Consider the following 69-residue polypeptide: Amphipathic peptide CT2 (69 aa).

Residues 1–23 (MKTQFVILIVAVVLLQLIANSEA) form the signal peptide. The residue at position 36 (F36) is a Phenylalanine amide. A propeptide spanning residues 40-69 (GLRNLDNLDDDIFEPEMSEADLRYLQDLLR) is cleaved from the precursor.

It belongs to the non-disulfide-bridged peptide (NDBP) superfamily. Short antimicrobial peptide (group 4) family. In terms of tissue distribution, expressed by the venom gland.

The protein resides in the secreted. Its subcellular location is the target cell membrane. In terms of biological role, amphipathic peptide that shows antibacterial activities against both Gram-positive (MIC=10 uM, 20 uM and 20 uM against S.aureus, B.subtilis and S.agalactiae, respectively) and Gram-negative bacteria (MIC=20 uM, 10 uM, and 10 uM against E.coli, S.typhi, and P.aeruginosa, respectively). Is mildly hemolytic at its MIC range, but shows a strong cytotoxic activity at higher concentrations, reaching 84% lysis at 50 uM. The sequence is that of Amphipathic peptide CT2 from Vaejovis mexicanus smithi (Mexican scorpion).